A 278-amino-acid chain; its full sequence is uncharacterized protein (278 aa).

Residues 112–113, 191–193, and aspartate 217 contribute to the NAD(+) site; these read HI and VGR. Arginine 193 is an active-site residue. Glutamate 222 is an active-site residue. Histidine 241 (proton donor) is an active-site residue. Position 241-244 (241-244) interacts with NAD(+); sequence HSAG.

This sequence belongs to the D-isomer specific 2-hydroxyacid dehydrogenase family.

This is an uncharacterized protein from Streptomyces coelicolor.